The following is a 314-amino-acid chain: Serine/threonine-protein phosphatase SIT4 (314 aa).

Mn(2+) is bound by residues D53, H55, D85, and N117. The Proton donor role is filled by H118. Mn(2+) contacts are provided by H167 and H241.

It belongs to the PPP phosphatase family. PP-6 (PP-V) subfamily. In terms of assembly, interacts with MDS3. Mn(2+) is required as a cofactor.

It is found in the cytoplasm. The enzyme catalyses O-phospho-L-seryl-[protein] + H2O = L-seryl-[protein] + phosphate. It carries out the reaction O-phospho-L-threonyl-[protein] + H2O = L-threonyl-[protein] + phosphate. Functionally, serine/threonine protein phosphatase which is involved in the dephosphorylation of the large subunit of RNA polymerase II. Is required in late G1 for normal G1 cyclin expression, bud initiation and expression of certain genes that are periodically expressed during late G1. Plays a role during hyphal growth through the regulation of cell wall biogenesis, osmosensing and protein translation. Involved in virulence in a mouse systemic infection model. The sequence is that of Serine/threonine-protein phosphatase SIT4 (SIT4) from Candida albicans (strain SC5314 / ATCC MYA-2876) (Yeast).